The following is a 204-amino-acid chain: Lymphotoxin-alpha (204 aa).

Positions 1-33 (MTPPGRLYLLRVCSTPPLLLLGLLLALPLEAQG) are cleaved as a signal peptide. Residues 62 to 204 (PAAHLVGDPS…SSVFFGAFAL (143 aa)) enclose the THD domain. N95 is a glycosylation site (N-linked (GlcNAc...) asparagine). C119 and C155 form a disulfide bridge.

The protein belongs to the tumor necrosis factor family. In terms of assembly, homotrimer, and heterotrimer of either two LTB and one LTA subunits or (less prevalent) two LTA and one LTB subunits. Interacts with TNFRSF14.

Its subcellular location is the secreted. It localises to the membrane. Its function is as follows. Cytokine that in its homotrimeric form binds to TNFRSF1A/TNFR1, TNFRSF1B/TNFBR and TNFRSF14/HVEM. In its heterotrimeric form with LTB binds to TNFRSF3/LTBR. Lymphotoxin is produced by lymphocytes and is cytotoxic for a wide range of tumor cells in vitro and in vivo. In Bos taurus (Bovine), this protein is Lymphotoxin-alpha (LTA).